Consider the following 453-residue polypeptide: Adenosylmethionine-8-amino-7-oxononanoate aminotransferase (453 aa).

Pyridoxal 5'-phosphate is bound at residue 118–119; the sequence is GA. Tyr151 contributes to the substrate binding site. Asp257 provides a ligand contact to pyridoxal 5'-phosphate. The substrate site is built by Lys286, Gly321, and Arg416. Residue Lys286 is modified to N6-(pyridoxal phosphate)lysine.

The protein belongs to the class-III pyridoxal-phosphate-dependent aminotransferase family. BioA subfamily. Homodimer. Requires pyridoxal 5'-phosphate as cofactor.

It localises to the cytoplasm. It catalyses the reaction (8S)-8-amino-7-oxononanoate + S-adenosyl-L-methionine = S-adenosyl-4-methylsulfanyl-2-oxobutanoate + (7R,8S)-7,8-diammoniononanoate. Its pathway is cofactor biosynthesis; biotin biosynthesis; 7,8-diaminononanoate from 8-amino-7-oxononanoate (SAM route): step 1/1. Catalyzes the transfer of the alpha-amino group from S-adenosyl-L-methionine (SAM) to 7-keto-8-aminopelargonic acid (KAPA) to form 7,8-diaminopelargonic acid (DAPA). It is the only aminotransferase known to utilize SAM as an amino donor. This is Adenosylmethionine-8-amino-7-oxononanoate aminotransferase from Aquifex aeolicus (strain VF5).